Here is a 440-residue protein sequence, read N- to C-terminus: Thymidine phosphorylase (440 aa).

It belongs to the thymidine/pyrimidine-nucleoside phosphorylase family. In terms of assembly, homodimer.

It catalyses the reaction thymidine + phosphate = 2-deoxy-alpha-D-ribose 1-phosphate + thymine. It functions in the pathway pyrimidine metabolism; dTMP biosynthesis via salvage pathway; dTMP from thymine: step 1/2. In terms of biological role, the enzymes which catalyze the reversible phosphorolysis of pyrimidine nucleosides are involved in the degradation of these compounds and in their utilization as carbon and energy sources, or in the rescue of pyrimidine bases for nucleotide synthesis. This Serratia proteamaculans (strain 568) protein is Thymidine phosphorylase.